The primary structure comprises 218 residues: Octanoyltransferase (218 aa).

In terms of domain architecture, BPL/LPL catalytic spans 31-206 (REAGDEVWLV…QLVKHLDYAE (176 aa)). Residues 70–77 (RGGQVTYH), 137–139 (SLG), and 150–152 (GLA) each bind substrate. C168 serves as the catalytic Acyl-thioester intermediate.

Belongs to the LipB family.

The protein localises to the cytoplasm. The enzyme catalyses octanoyl-[ACP] + L-lysyl-[protein] = N(6)-octanoyl-L-lysyl-[protein] + holo-[ACP] + H(+). It participates in protein modification; protein lipoylation via endogenous pathway; protein N(6)-(lipoyl)lysine from octanoyl-[acyl-carrier-protein]: step 1/2. Catalyzes the transfer of endogenously produced octanoic acid from octanoyl-acyl-carrier-protein onto the lipoyl domains of lipoate-dependent enzymes. Lipoyl-ACP can also act as a substrate although octanoyl-ACP is likely to be the physiological substrate. This chain is Octanoyltransferase, found in Pseudomonas syringae pv. tomato (strain ATCC BAA-871 / DC3000).